The chain runs to 470 residues: ATP synthase subunit beta (470 aa).

Residue 157-164 participates in ATP binding; it reads GGAGVGKT.

Belongs to the ATPase alpha/beta chains family. In terms of assembly, F-type ATPases have 2 components, CF(1) - the catalytic core - and CF(0) - the membrane proton channel. CF(1) has five subunits: alpha(3), beta(3), gamma(1), delta(1), epsilon(1). CF(0) has three main subunits: a(1), b(2) and c(9-12). The alpha and beta chains form an alternating ring which encloses part of the gamma chain. CF(1) is attached to CF(0) by a central stalk formed by the gamma and epsilon chains, while a peripheral stalk is formed by the delta and b chains.

The protein localises to the cell inner membrane. The enzyme catalyses ATP + H2O + 4 H(+)(in) = ADP + phosphate + 5 H(+)(out). Functionally, produces ATP from ADP in the presence of a proton gradient across the membrane. The catalytic sites are hosted primarily by the beta subunits. This is ATP synthase subunit beta from Geotalea daltonii (strain DSM 22248 / JCM 15807 / FRC-32) (Geobacter daltonii).